Consider the following 500-residue polypeptide: MAMMAMGAASWAPIPAPARAAAAFYPGRDLAAARRRRGAAARRPFVFTPRAVSDSRSSQTCLDPDASTSVLGIILGGGAGTRLYPLTKKRAKPAVPLGANYRLIDIPVSNCLNSNVSKIYVLTQFNSASLNRHLSRAYGNNIGGYKNEGFVEVLAAQQSPENPNWFQGTADAVRQYLWLFEEHNVMEFLILAGDHLYRMDYQKFIQAHRETNADITVAALPMDEERATAFGLMKIDDEGRIIEFAEKPKGEKLKSMMVDTTILGLDTERAKELPYIASMGIYVFSKDVMLKLLRQNFPAANDFGSEVIPGATEIGMRVQAYLYDGYWEDIGTIEAFYNANLGITKKPVPDFSFYDRSAAIYTQPRYLPPSKVLDADVTDSVIGEGCVIRHCTINHSVVGLRSCISEGAVIEDSLLMGADYYETETDKKALSETGGIPIGIGKNAHIRKAIIDKNARIGENVKIINVDNIQEASRETDGYFIKSGIVTVIKDALIPSGTVI.

A chloroplast-targeting transit peptide spans 1 to 50; it reads MAMMAMGAASWAPIPAPARAAAAFYPGRDLAAARRRRGAAARRPFVFTPR.

This sequence belongs to the bacterial/plant glucose-1-phosphate adenylyltransferase family. In terms of assembly, heterotetramer composed of two small and two large subunits. Expressed in leaves.

The protein resides in the plastid. It is found in the chloroplast. Its subcellular location is the amyloplast. It carries out the reaction alpha-D-glucose 1-phosphate + ATP + H(+) = ADP-alpha-D-glucose + diphosphate. Its pathway is glycan biosynthesis; starch biosynthesis. Activated by 3'phosphoglycerate, inhibited by orthophosphate. Allosteric regulation. Functionally, involved in synthesis of starch. Catalyzes the synthesis of ADP-glucose, a molecule that serves as an activated glycosyl donor for alpha-1,4-glucan synthesis. Essential for starch synthesis in leaf chloroplasts and endosperm amyloplasts. This is Glucose-1-phosphate adenylyltransferase small subunit 1, chloroplastic/amyloplastic from Oryza sativa subsp. japonica (Rice).